Reading from the N-terminus, the 191-residue chain is Protein NUCLEAR FUSION DEFECTIVE 2 (191 aa).

The first 29 residues, 1-29, serve as a signal peptide directing secretion; that stretch reads MATLRFTLLLLVFVVGIFFSFSSVSHVRA. The RNase III domain maps to 48-167; the sequence is LAKLQTQIGY…IFGAIAIDAG (120 aa).

In terms of biological role, required for karyogamy during female gametophyte development, when the two polar nuclei fuse to form the diploid central cell nucleus. The protein is Protein NUCLEAR FUSION DEFECTIVE 2 of Arabidopsis thaliana (Mouse-ear cress).